We begin with the raw amino-acid sequence, 307 residues long: Homoserine kinase (307 aa).

91–101 (PLARGLGSSAA) serves as a coordination point for ATP.

It belongs to the GHMP kinase family. Homoserine kinase subfamily.

The protein localises to the cytoplasm. The enzyme catalyses L-homoserine + ATP = O-phospho-L-homoserine + ADP + H(+). Its pathway is amino-acid biosynthesis; L-threonine biosynthesis; L-threonine from L-aspartate: step 4/5. Functionally, catalyzes the ATP-dependent phosphorylation of L-homoserine to L-homoserine phosphate. This is Homoserine kinase from Deinococcus radiodurans (strain ATCC 13939 / DSM 20539 / JCM 16871 / CCUG 27074 / LMG 4051 / NBRC 15346 / NCIMB 9279 / VKM B-1422 / R1).